A 216-amino-acid chain; its full sequence is Adenylate kinase (216 aa).

10–15 serves as a coordination point for ATP; it reads GAGKGT. Residues 30-59 form an NMP region; sequence STGDIFRKNISEKTPLGVKAKEYMDKGQLV. AMP-binding positions include T31, R36, 57–59, 85–88, and Q92; these read QLV and GFPR. The tract at residues 126-163 is LID; it reads GRRVCPSCGASYHIKFNPPKIEGLCDVCKKEVIQRKDD. R127 lines the ATP pocket. C130 and C133 together coordinate Zn(2+). 136-137 is an ATP binding site; the sequence is SY. Residues C150 and C153 each coordinate Zn(2+). Residues R160 and R171 each coordinate AMP. Q199 lines the ATP pocket.

The protein belongs to the adenylate kinase family. In terms of assembly, monomer.

It is found in the cytoplasm. It carries out the reaction AMP + ATP = 2 ADP. Its pathway is purine metabolism; AMP biosynthesis via salvage pathway; AMP from ADP: step 1/1. Its function is as follows. Catalyzes the reversible transfer of the terminal phosphate group between ATP and AMP. Plays an important role in cellular energy homeostasis and in adenine nucleotide metabolism. In Clostridium novyi (strain NT), this protein is Adenylate kinase.